Consider the following 592-residue polypeptide: Vacuolin-B (592 aa).

Residues methionine 1–serine 30 show a composition bias toward polar residues. Positions methionine 1 to asparagine 35 are disordered. Residues lysine 480–glutamine 534 are a coiled coil. Positions aspartate 491–glutamate 555 are oligomerization domain.

The protein belongs to the vacuolin family. As to quaternary structure, homotrimer.

The protein resides in the endosome membrane. Its subcellular location is the lysosome membrane. Its function is as follows. Negative regulator of late steps of the endocytic pathway. This chain is Vacuolin-B (vacB), found in Dictyostelium discoideum (Social amoeba).